The following is a 206-amino-acid chain: dCTP deaminase, dUMP-forming (206 aa).

DCTP is bound by residues 117-122, aspartate 135, 143-145, glutamine 163, tyrosine 177, lysine 184, and glutamine 188; these read RSSFGR and TLE. Glutamate 145 (proton donor/acceptor) is an active-site residue.

Belongs to the dCTP deaminase family. Homotrimer.

The catalysed reaction is dCTP + 2 H2O = dUMP + NH4(+) + diphosphate. Its pathway is pyrimidine metabolism; dUMP biosynthesis; dUMP from dCTP: step 1/1. In terms of biological role, bifunctional enzyme that catalyzes both the deamination of dCTP to dUTP and the hydrolysis of dUTP to dUMP without releasing the toxic dUTP intermediate. The sequence is that of dCTP deaminase, dUMP-forming from Methanococcus vannielii (strain ATCC 35089 / DSM 1224 / JCM 13029 / OCM 148 / SB).